Reading from the N-terminus, the 381-residue chain is Subtilisin J (381 aa).

The N-terminal stretch at 1–29 (MRSKKLWISLLFALTLIFTMAFSNMSVQA) is a signal peptide. The propeptide occupies 30–106 (AGKSSTEKKY…VEEDHIAHEY (77 aa)). In terms of domain architecture, Inhibitor I9 spans 38 to 103 (KYIVGFKQTM…VAYVEEDHIA (66 aa)). Residue Gln108 participates in Ca(2+) binding. Residues 111 to 380 (PYGISQIKAP…KGLINVQAAA (270 aa)) enclose the Peptidase S8 domain. Asp138 functions as the Charge relay system in the catalytic mechanism. A Ca(2+)-binding site is contributed by Asp147. His170 (charge relay system) is an active-site residue. Ca(2+) is bound by residues Leu181, Asn183, Ile185, Val187, Ala275, Tyr277, and Thr280. Residue Ser327 is the Charge relay system of the active site.

The protein belongs to the peptidase S8 family. It depends on Ca(2+) as a cofactor.

Its subcellular location is the secreted. The enzyme catalyses Hydrolysis of proteins with broad specificity for peptide bonds, and a preference for a large uncharged residue in P1. Hydrolyzes peptide amides.. In terms of biological role, subtilisin is an extracellular alkaline serine protease, it catalyzes the hydrolysis of proteins and peptide amides. In Geobacillus stearothermophilus (Bacillus stearothermophilus), this protein is Subtilisin J (aprJ).